An 836-amino-acid polypeptide reads, in one-letter code: Pentatricopeptide repeat-containing protein At1g79490, mitochondrial (836 aa).

The N-terminal 85 residues, 1–85 (MIRGRTAKVI…QCRSIVRRFC (85 aa)), are a transit peptide targeting the mitochondrion. 12 PPR repeats span residues 204–238 (SDECYVVLFDGLNQGRDFVGIQSLFEEMVQDSSSH), 242–276 (SFNAYNQVIQYLAKAEKLEVAFCCFKKAQESGCKI), 277–311 (DTQTYNNLMMLFLNKGLPYKAFEIYESMEKTDSLL), 312–346 (DGSTYELIIPSLAKSGRLDAAFKLFQQMKERKLRP), 347–381 (SFSVFSSLVDSMGKAGRLDTSMKVYMEMQGFGHRP), 382–416 (SATMFVSLIDSYAKAGKLDTALRLWDEMKKSGFRP), 417–451 (NFGLYTMIIESHAKSGKLEVAMTVFKDMEKAGFLP), 452–486 (TPSTYSCLLEMHAGSGQVDSAMKIYNSMTNAGLRP), 487–521 (GLSSYISLLTLLANKRLVDVAGKILLEMKAMGYSV), 528–555 (VLMIYIKDASVDLALKWLRFMGSSGIKT), 556–590 (NNFIIRQLFESCMKNGLYDSARPLLETLVHSAGKV), and 591–625 (DLVLYTSILAHLVRCQDEDKERQLMSILSATKHKA). A Smr domain is found at 710–786 (LDVRNLSVGA…APGELVMEWF (77 aa)).

Belongs to the PPR family. P subfamily.

Its subcellular location is the mitochondrion. This is Pentatricopeptide repeat-containing protein At1g79490, mitochondrial (EMB2217) from Arabidopsis thaliana (Mouse-ear cress).